The sequence spans 209 residues: Transmembrane 4 L6 family member 19 (209 aa).

The Cytoplasmic portion of the chain corresponds to 1–16; the sequence is MVSSPCTQASSRTCSR. Residues 17-37 traverse the membrane as a helical segment; it reads ILGLSLGTAALFAAGANVALL. The Extracellular portion of the chain corresponds to 38–59; sequence LPNWDVTYLLRGLLGRHAMLGT. Residues 60 to 80 traverse the membrane as a helical segment; that stretch reads GLWGGGLMVLTAAILISLMGW. Residues 81–93 lie on the Cytoplasmic side of the membrane; it reads RYGCFSKSGLCRS. Residues 94–114 form a helical membrane-spanning segment; it reads VLTALLSGGLALLGALICFVT. At 115–175 the chain is on the extracellular side; the sequence is SGVALKDGPF…PSAAVVWHVS (61 aa). N-linked (GlcNAc...) asparagine glycosylation occurs at asparagine 133. The helical transmembrane segment at 176-196 threads the bilayer; the sequence is LFSALLCISLLQLLLVVVHVI. The interval 186–196 is important for homodimerization; sequence LQLLLVVVHVI. Residues 197–209 lie on the Cytoplasmic side of the membrane; it reads NSLLGLFCSLCEK.

This sequence belongs to the L6 tetraspanin family. In terms of assembly, may form homodimers and homooligomers. Interacts with integrins ITGAV and ITGB3. Interacts with components of members of the V0 complex of vacuolar(H+)-ATPase (V-ATPase), including ATP6V0B and ATP6V0D2; this interaction inhibits V1-V0 complex assembly. As to expression, in adipose tissue, expressed by macrophages.

The protein resides in the lysosome membrane. The protein localises to the cytoplasm. Its subcellular location is the cytoskeleton. It is found in the cell projection. It localises to the filopodium. Negatively regulates vacuolar (H+)-ATPase (V-ATPase) activity by interacting with members of V-ATPase V0 complex and hence inhibiting V1-V0 complex assembly. Required for multinucleation during osteoclast differentiation. This chain is Transmembrane 4 L6 family member 19 (TM4SF19), found in Homo sapiens (Human).